A 279-amino-acid chain; its full sequence is Eukaryotic translation initiation factor 3 subunit G (279 aa).

Disordered regions lie at residues 69–90 (AKYG…QLGE) and 149–193 (LNGG…EARD). Ser-77 bears the Phosphoserine mark. One can recognise an RRM domain in the interval 196 to 275 (TTLKVSQLNT…LILHLEWSKK (80 aa)).

Belongs to the eIF-3 subunit G family. As to quaternary structure, component of the eukaryotic translation initiation factor 3 (eIF-3) complex.

It is found in the cytoplasm. In terms of biological role, RNA-binding component of the eukaryotic translation initiation factor 3 (eIF-3) complex, which is involved in protein synthesis of a specialized repertoire of mRNAs and, together with other initiation factors, stimulates binding of mRNA and methionyl-tRNAi to the 40S ribosome. The eIF-3 complex specifically targets and initiates translation of a subset of mRNAs involved in cell proliferation. This subunit can bind 18S rRNA. This is Eukaryotic translation initiation factor 3 subunit G from Lodderomyces elongisporus (strain ATCC 11503 / CBS 2605 / JCM 1781 / NBRC 1676 / NRRL YB-4239) (Yeast).